We begin with the raw amino-acid sequence, 264 residues long: Small ribosomal subunit protein eS1 (264 aa).

K34 bears the N6-acetyllysine; alternate mark. Residue K34 forms a Glycyl lysine isopeptide (Lys-Gly) (interchain with G-Cter in SUMO2); alternate linkage. Position 56 is an N6-acetyllysine (K56). Y155 carries the post-translational modification ADP-ribosyltyrosine. The interval 233–264 (GEGSSSGKATGDETGAKVERADGYEPPVQESV) is disordered. S236 and S237 each carry phosphoserine. Residues 242-255 (TGDETGAKVERADG) show a composition bias toward basic and acidic residues. An N6-acetyllysine; alternate modification is found at K249. Residue K249 forms a Glycyl lysine isopeptide (Lys-Gly) (interchain with G-Cter in SUMO2); alternate linkage. Phosphotyrosine is present on Y256. S263 carries the post-translational modification Phosphoserine.

Belongs to the eukaryotic ribosomal protein eS1 family. In terms of assembly, component of the small ribosomal subunit. Mature ribosomes consist of a small (40S) and a large (60S) subunit. The 40S subunit contains about 33 different proteins and 1 molecule of RNA (18S). The 60S subunit contains about 49 different proteins and 3 molecules of RNA (28S, 5.8S and 5S). Part of the small subunit (SSU) processome, composed of more than 70 proteins and the RNA chaperone small nucleolar RNA (snoRNA) U3. Post-translationally, ADP-ribosylated at Tyr-155 by PARP1 in presence of HPF1.

The protein resides in the cytoplasm. It localises to the nucleus. It is found in the nucleolus. Its function is as follows. Component of the small ribosomal subunit. The ribosome is a large ribonucleoprotein complex responsible for the synthesis of proteins in the cell. Part of the small subunit (SSU) processome, first precursor of the small eukaryotic ribosomal subunit. During the assembly of the SSU processome in the nucleolus, many ribosome biogenesis factors, an RNA chaperone and ribosomal proteins associate with the nascent pre-rRNA and work in concert to generate RNA folding, modifications, rearrangements and cleavage as well as targeted degradation of pre-ribosomal RNA by the RNA exosome. May play a role during erythropoiesis. The chain is Small ribosomal subunit protein eS1 from Callithrix jacchus (White-tufted-ear marmoset).